A 148-amino-acid chain; its full sequence is uncharacterized protein (148 aa).

A compositionally biased stretch (low complexity) spans 1–17 (MCPPVRQRPAQAPPAKR). 2 disordered regions span residues 1 to 86 (MCPP…VQSP) and 122 to 148 (RAHRLPQPKPPCQSRQRPSPDSQTSPC). Over residues 38-57 (RPPKMQRRPRPPVAKRRRFP) the composition is skewed to basic residues. A compositionally biased stretch (polar residues) spans 134–148 (QSRQRPSPDSQTSPC).

The protein belongs to the Epstein-Barr virus BLLF2 family.

This is an uncharacterized protein from Homo sapiens (Human).